The sequence spans 952 residues: MAWWNKLFGDPQERKVKKYQPRVAEMNALEAEVAALSDDQLRAKTAVFQKRVADQLQGVDLDALEIRERRRRIDVALDGVISEAFAVVREAAKRVIGLRHYDVQLIGGLVLHEGQIAEMKTGEGKTLVATLPAYLNALTGRGVHIVTVNDYLARRDSEWMGQVHRFLGLSVGLIQQSMTPSERAQNYAADITYGTNSELGFDYLRDNMATNAGELVQRSFNYCIIDEVDSILVDEARTPLIISGMVAKPAEKYMRANEVATALERNTHYEVDEKQRNVTLTDEGFIAAEQMLSTEDLFSPRDPWAHFVFNAVKAKELFNKDVQYIVRNDEVVIVDEFTGRVMPGRRWSEGLHQAVEAKEMVTIQNETQTMASITYQNFFLLYPKLAGMTGTALTEEAEFGKIYSLEVTAIPTNRKVVRTDMSDQVYKTENGKWQSVAAEIAEMNKNGRPVLVGTTSVEKSEVLSALLKEKGIAHNLLNAKPENVERESEIVAQAGRKGGVTIATNMAGRGTDILLGGNPEYMARLKLKEVLFPALVIDDEDAFSPMMRLLNNGNSRGTGFAATSKKKALPKAEIFPCELSESTKQQLKAAVDYAVAMLGADSQPALQVEELIAVASEKGPTDDPVIQHLREIYRAIYKEYQVVTDREHDEVVKLGGLHVIGTERHEARRVDNQLRGRSGRQGDPGSTRFFLSLGDNLLRIFGGERVAGLMEAFKVEEDMPIESGLLTKSLENAQRKVETFYYDQRKQVFEYDEVMNNQRKAIYAERRRALEGQDLSAVVREYIDQTVDEIVRAHVNAERPPEEWELPALIQDLQQLIPLLENQLDAVKLGEFSAVELEEDLKSQALLAYETREEYINAIQPDLMREAERYFILNQIDTLWREHLQQMDSLREMIGLRGYGQKDPLIEYKNEGYELFLQMLVEVRRNVVFALYHFQPQYNPPIDPDYVDSEYV.

ATP is bound by residues glutamine 104, 122-126 (GEGKT), and aspartate 512.

This sequence belongs to the SecA family. Monomer and homodimer. Part of the essential Sec protein translocation apparatus which comprises SecA, SecYEG and auxiliary proteins SecDF. Other proteins may also be involved.

Its subcellular location is the cell inner membrane. The protein resides in the cytoplasm. It carries out the reaction ATP + H2O + cellular proteinSide 1 = ADP + phosphate + cellular proteinSide 2.. In terms of biological role, part of the Sec protein translocase complex. Interacts with the SecYEG preprotein conducting channel. Has a central role in coupling the hydrolysis of ATP to the transfer of proteins into and across the cell membrane, serving as an ATP-driven molecular motor driving the stepwise translocation of polypeptide chains across the membrane. This Gloeobacter violaceus (strain ATCC 29082 / PCC 7421) protein is Protein translocase subunit SecA.